The sequence spans 96 residues: UPF0235 protein VIBHAR_03581 (96 aa).

This sequence belongs to the UPF0235 family.

In Vibrio campbellii (strain ATCC BAA-1116), this protein is UPF0235 protein VIBHAR_03581.